The following is a 336-amino-acid chain: tRNA N6-adenosine threonylcarbamoyltransferase (336 aa).

Residues H114 and H118 each coordinate Fe cation. Substrate is bound by residues 136–140, D169, G182, D186, and N275; that span reads LVSGG. Fe cation is bound at residue D301.

Belongs to the KAE1 / TsaD family. Fe(2+) serves as cofactor.

The protein localises to the cytoplasm. It catalyses the reaction L-threonylcarbamoyladenylate + adenosine(37) in tRNA = N(6)-L-threonylcarbamoyladenosine(37) in tRNA + AMP + H(+). In terms of biological role, required for the formation of a threonylcarbamoyl group on adenosine at position 37 (t(6)A37) in tRNAs that read codons beginning with adenine. Is involved in the transfer of the threonylcarbamoyl moiety of threonylcarbamoyl-AMP (TC-AMP) to the N6 group of A37, together with TsaE and TsaB. TsaD likely plays a direct catalytic role in this reaction. The polypeptide is tRNA N6-adenosine threonylcarbamoyltransferase (Streptococcus pneumoniae (strain JJA)).